The sequence spans 334 residues: Dihydroorotate dehydrogenase (quinone) (334 aa).

FMN is bound by residues 59 to 63 (AGLDK) and Thr-83. Residue Lys-63 coordinates substrate. Residue 108-112 (NRMGF) coordinates substrate. Asn-136 and Asn-169 together coordinate FMN. Residue Asn-169 participates in substrate binding. Ser-172 functions as the Nucleophile in the catalytic mechanism. Asn-174 serves as a coordination point for substrate. Lys-214 and Thr-242 together coordinate FMN. Position 243-244 (243-244 (NT)) interacts with substrate. Residues Gly-265, Gly-294, and 315–316 (YS) each bind FMN.

This sequence belongs to the dihydroorotate dehydrogenase family. Type 2 subfamily. In terms of assembly, monomer. The cofactor is FMN.

It is found in the cell membrane. It catalyses the reaction (S)-dihydroorotate + a quinone = orotate + a quinol. It functions in the pathway pyrimidine metabolism; UMP biosynthesis via de novo pathway; orotate from (S)-dihydroorotate (quinone route): step 1/1. Catalyzes the conversion of dihydroorotate to orotate with quinone as electron acceptor. The polypeptide is Dihydroorotate dehydrogenase (quinone) (Acinetobacter baumannii (strain SDF)).